The following is a 202-amino-acid chain: LexA repressor (202 aa).

The segment at residues 28-48 is a DNA-binding region (H-T-H motif); the sequence is RAEIAQRLGFRSPNAAEEHLK. Active-site for autocatalytic cleavage activity residues include Ser119 and Lys156.

The protein belongs to the peptidase S24 family. As to quaternary structure, homodimer.

The enzyme catalyses Hydrolysis of Ala-|-Gly bond in repressor LexA.. Its function is as follows. Represses a number of genes involved in the response to DNA damage (SOS response), including recA and lexA. Binds to the 16 bp palindromic sequence 5'-CTGTATATATATACAG-3'. In the presence of single-stranded DNA, RecA interacts with LexA causing an autocatalytic cleavage which disrupts the DNA-binding part of LexA, leading to derepression of the SOS regulon and eventually DNA repair. The sequence is that of LexA repressor from Escherichia coli (strain K12 / MC4100 / BW2952).